Here is a 155-residue protein sequence, read N- to C-terminus: Ribosomal RNA large subunit methyltransferase H (155 aa).

S-adenosyl-L-methionine contacts are provided by residues Leu-72, Gly-103, and 122-127 (LGRMVW).

This sequence belongs to the RNA methyltransferase RlmH family. Homodimer.

Its subcellular location is the cytoplasm. It catalyses the reaction pseudouridine(1915) in 23S rRNA + S-adenosyl-L-methionine = N(3)-methylpseudouridine(1915) in 23S rRNA + S-adenosyl-L-homocysteine + H(+). Functionally, specifically methylates the pseudouridine at position 1915 (m3Psi1915) in 23S rRNA. The sequence is that of Ribosomal RNA large subunit methyltransferase H from Cereibacter sphaeroides (strain KD131 / KCTC 12085) (Rhodobacter sphaeroides).